Here is a 643-residue protein sequence, read N- to C-terminus: MSDKSDLKAELERKKQRLAQIREEKKRKEEERKKKEADMQQKKEPVPDDSDLDRKRRETEALLQSIGISPEPPLVQPLHFLTWDTCYFHYLVPTPMSPSSKSVSTPSEAGSQDDLGPLTRTLQWDTDPSVLQLQSDSELGRRLNKLGVSKVTQVDFLPREVVSYSKETQTPLATHQSEEDEEDEEMVEPKVGHDSELENQDKKQETKEAPPRELTEEEKQQILHSEEFLIFFDRTIRVIERALAEDSDIFFDYSGRELEEKDGDVQAGANLSFNRQFYDEHWSKHRVVTCMDWSLQYPELMVASYSNNEDAPHEPDGVALVWNMKFKKTTPEYVFHCQSSVMSVCFARFHPNLVVGGTYSGQIVLWDNRSHRRTPVQRTPLSAAAHTHPVYCVNVVGTQNAHNLITVSTDGKMCSWSLDMLSTPQESMELVYNKSKPVAVTGMAFPTGDVNNFVVGSEEGTVYTACRHGSKAGIGEVFEGHQGPVTGINCHMAVGPIDFSHLFVTSSFDWTVKLWTTKHNKPLYSFEDNADYVYDVMWSPVHPALFACVDGMGRLDLWNLNSDTEVPTASVAIEGAYALNRVRWAQGGKEVAVGDSEGRIWIYDVGELAVPHNDEWTRFARTLVEIRANRADSEEEGAVELAA.

2 stretches are compositionally biased toward basic and acidic residues: residues 1 to 13 and 20 to 60; these read MSDK…ELER and QIRE…RETE. 2 disordered regions span residues 1 to 65 and 96 to 123; these read MSDK…LLQS and MSPS…RTLQ. S2 is subject to N-acetylserine. Residues 2–123 are interaction with DCTN1; sequence SDKSDLKAEL…DLGPLTRTLQ (122 aa). S50 and S100 each carry phosphoserine. Positions 96–107 are enriched in low complexity; that stretch reads MSPSSKSVSTPS. The residue at position 105 (T105) is a Phosphothreonine. 2 positions are modified to phosphoserine: S107 and S111. The tract at residues 145–161 is interaction with DYNLT1; sequence KLGVSKVTQVDFLPREV. A disordered region spans residues 167 to 219; it reads ETQTPLATHQSEEDEEDEEMVEPKVGHDSELENQDKKQETKEAPPRELTEEEK. A Phosphothreonine modification is found at T174. 2 positions are modified to phosphoserine: S177 and S195. Basic and acidic residues predominate over residues 187 to 219; sequence VEPKVGHDSELENQDKKQETKEAPPRELTEEEK. WD repeat units lie at residues 283–332, 336–376, 385–426, 435–475, 480–525, 528–568, and 574–613; these read SKHR…TTPE, HCQS…RTPV, AHTH…TPQE, SKPV…AGIG, GHQG…PLYS, DNAD…EVPT, and EGAY…VPHN. S633 is subject to Phosphoserine.

It belongs to the dynein intermediate chain family. In terms of assembly, homodimer. The cytoplasmic dynein 1 complex consists of two catalytic heavy chains (HCs) and a number of non-catalytic subunits presented by intermediate chains (ICs), light intermediate chains (LICs) and light chains (LCs); the composition seems to vary in respect to the IC, LIC and LC composition. The heavy chain homodimer serves as a scaffold for the probable homodimeric assembly of the respective non-catalytic subunits. The ICs and LICs bind directly to the HC dimer and the LCs assemble on the IC dimer. Isoform 1, isoform 2 and isoform 3 interact with DYNC1H1. Isoform 1, isoform 2 and isoform 3 interact with DYNLT3. Isoform 1, isoform 2 and isoform 3 interact with DYNLT1. Interacts with DCTN1. Interacts with MCRS1; the interaction is required for the proper distribution of centriolar satellites. High levels seen in the brain and testis, while a lower level expression is seen in the liver, spleen, kidney, lung, skeletal muscle and heart.

It is found in the cytoplasm. Its subcellular location is the chromosome. It localises to the centromere. The protein resides in the kinetochore. The protein localises to the cytoskeleton. It is found in the spindle pole. Functionally, acts as one of several non-catalytic accessory components of the cytoplasmic dynein 1 complex that are thought to be involved in linking dynein to cargos and to adapter proteins that regulate dynein function. Cytoplasmic dynein 1 acts as a motor for the intracellular retrograde motility of vesicles and organelles along microtubules. The intermediate chains mediate the binding of dynein to dynactin via its 150 kDa component (p150-glued) DCTN1. May play a role in mediating the interaction of cytoplasmic dynein with membranous organelles and kinetochores. This chain is Cytoplasmic dynein 1 intermediate chain 1 (Dync1i1), found in Rattus norvegicus (Rat).